A 371-amino-acid chain; its full sequence is o-succinylbenzoate synthase (371 aa).

Catalysis depends on lysine 164, which acts as the Proton donor. Mg(2+) is bound by residues aspartate 189, glutamate 214, and aspartate 239. Lysine 263 functions as the Proton acceptor in the catalytic mechanism.

The protein belongs to the mandelate racemase/muconate lactonizing enzyme family. MenC type 2 subfamily. Requires a divalent metal cation as cofactor.

It catalyses the reaction (1R,6R)-6-hydroxy-2-succinyl-cyclohexa-2,4-diene-1-carboxylate = 2-succinylbenzoate + H2O. Its pathway is quinol/quinone metabolism; 1,4-dihydroxy-2-naphthoate biosynthesis; 1,4-dihydroxy-2-naphthoate from chorismate: step 4/7. The protein operates within quinol/quinone metabolism; menaquinone biosynthesis. Converts 2-succinyl-6-hydroxy-2,4-cyclohexadiene-1-carboxylate (SHCHC) to 2-succinylbenzoate (OSB). Does not show detectable N-acylamino acid racemase (NAAAR) activity with N-acetyl-S-methionine as substrate. The chain is o-succinylbenzoate synthase from Bacillus subtilis (strain 168).